A 2223-amino-acid chain; its full sequence is Protein Ycf2 (2223 aa).

Residue 1576–1583 (GSIGTGRS) coordinates ATP.

The protein belongs to the Ycf2 family.

The protein localises to the plastid. The protein resides in the chloroplast stroma. In terms of biological role, probable ATPase of unknown function. Its presence in a non-photosynthetic plant (Epifagus virginiana) and experiments in tobacco indicate that it has an essential function which is probably not related to photosynthesis. The sequence is that of Protein Ycf2 from Silene latifolia (White campion).